We begin with the raw amino-acid sequence, 73 residues long: Toxin Td7 (73 aa).

The signal sequence occupies residues 1 to 7; the sequence is IGMAVEC. The LCN-type CS-alpha/beta domain occupies 8-70; that stretch reads KDGYLVGADG…VWDSATNRCG (63 aa). Intrachain disulfides connect C18-C69, C22-C44, C30-C50, and C34-C52. Lysine amide is present on K71.

Belongs to the long (4 C-C) scorpion toxin superfamily. Sodium channel inhibitor family. Beta subfamily. In terms of tissue distribution, expressed by the venom gland.

Its subcellular location is the secreted. In terms of biological role, beta toxins bind voltage-independently at site-4 of sodium channels (Nav) and shift the voltage of activation toward more negative potentials thereby affecting sodium channel activation and promoting spontaneous and repetitive firing. The protein is Toxin Td7 of Tityus discrepans (Venezuelan scorpion).